The primary structure comprises 835 residues: Protein translocase subunit SecA 1 (835 aa).

Residues Gln-85, Gly-103 to Thr-107, and Asp-492 contribute to the ATP site. The interval Val-788 to Val-807 is disordered. Zn(2+) is bound by residues Cys-819, Cys-821, Cys-830, and Cys-831.

The protein belongs to the SecA family. Monomer and homodimer. Part of the essential Sec protein translocation apparatus which comprises SecA, SecYEG and auxiliary proteins SecDF. Other proteins may also be involved. Zn(2+) is required as a cofactor.

The protein resides in the cell membrane. It localises to the cytoplasm. It catalyses the reaction ATP + H2O + cellular proteinSide 1 = ADP + phosphate + cellular proteinSide 2.. In terms of biological role, part of the Sec protein translocase complex. Interacts with the SecYEG preprotein conducting channel. Has a central role in coupling the hydrolysis of ATP to the transfer of proteins into and across the cell membrane, serving as an ATP-driven molecular motor driving the stepwise translocation of polypeptide chains across the membrane. The protein is Protein translocase subunit SecA 1 of Bacillus thuringiensis subsp. konkukian (strain 97-27).